The chain runs to 84 residues: Exendin-2-long (84 aa).

A signal peptide spans 1-23 (MKSILWLCVFGLLIATLFPVSWQ). A propeptide spanning residues 24–44 (MAIKSRLSSEDSETDQRLFES) is cleaved from the precursor.

The protein belongs to the glucagon family. Post-translationally, an amidated Pro-81 is described. Such an amidation is however not compatible with the sequence displayed. Indeed cDNAs do not encode a Gly that could serve as substrate for peptide alpha-amidation. As to expression, expressed by the venom gland. Not expressed in the pancreas, liver, stomach, small intestine, lung, heart, kidney, spleen, ovary, and brain.

It localises to the secreted. Its function is as follows. Has vasoactive intestinal peptide(VIP)/secretin-like biological activity. Interacts with rat and human VIP receptors 1 (VIPR1) and 2 (VIPR2), with the highest affinity for the human VIPR2. Induces hypotension that is mediated by relaxation of cardiac smooth muscle. This vasodilation may not be transduced by VIP or PACAP receptors. The chain is Exendin-2-long from Heloderma suspectum (Gila monster).